The chain runs to 100 residues: NAD(P)H-quinone oxidoreductase subunit 4L, chloroplastic (100 aa).

3 helical membrane passes run 2 to 22 (ILQH…FGLI), 28 to 48 (VKIL…LVIF), and 61 to 81 (LFGL…LAIL).

It belongs to the complex I subunit 4L family. NDH is composed of at least 16 different subunits, 5 of which are encoded in the nucleus.

The protein localises to the plastid. It localises to the chloroplast thylakoid membrane. The catalysed reaction is a plastoquinone + NADH + (n+1) H(+)(in) = a plastoquinol + NAD(+) + n H(+)(out). It catalyses the reaction a plastoquinone + NADPH + (n+1) H(+)(in) = a plastoquinol + NADP(+) + n H(+)(out). Its function is as follows. NDH shuttles electrons from NAD(P)H:plastoquinone, via FMN and iron-sulfur (Fe-S) centers, to quinones in the photosynthetic chain and possibly in a chloroplast respiratory chain. The immediate electron acceptor for the enzyme in this species is believed to be plastoquinone. Couples the redox reaction to proton translocation, and thus conserves the redox energy in a proton gradient. This Chara vulgaris (Common stonewort) protein is NAD(P)H-quinone oxidoreductase subunit 4L, chloroplastic.